The chain runs to 512 residues: Alanine--glyoxylate aminotransferase 2, mitochondrial (512 aa).

The transit peptide at 1 to 39 (MSLAWRTLQKAFYLETSLRILQMRPSLSCASRIYVPKLT) directs the protein to the mitochondrion. Position 55 is an N6-acetyllysine (Lys55). Lys69 bears the N6-acetyllysine; alternate mark. An N6-succinyllysine; alternate modification is found at Lys69. At Lys82 the chain carries N6-acetyllysine. Lys260 carries the post-translational modification N6-acetyllysine; alternate. Lys260 is subject to N6-succinyllysine; alternate. At Lys302 the chain carries N6-succinyllysine. Position 348 is an N6-(pyridoxal phosphate)lysine (Lys348). An N6-acetyllysine; alternate mark is found at Lys415 and Lys418. 2 positions are modified to N6-succinyllysine; alternate: Lys415 and Lys418. Residue Lys452 is modified to N6-acetyllysine.

It belongs to the class-III pyridoxal-phosphate-dependent aminotransferase family. In terms of assembly, homotetramer. It depends on pyridoxal 5'-phosphate as a cofactor. In terms of tissue distribution, expressed in the liver, lung and kidney.

It localises to the mitochondrion. It catalyses the reaction glyoxylate + L-alanine = glycine + pyruvate. The enzyme catalyses (R)-3-amino-2-methylpropanoate + pyruvate = 2-methyl-3-oxopropanoate + L-alanine. The catalysed reaction is 3-oxopropanoate + L-alanine = beta-alanine + pyruvate. It carries out the reaction 2-oxobutanoate + L-alanine = (2S)-2-aminobutanoate + pyruvate. It catalyses the reaction N(omega),N(omega)-dimethyl-L-arginine + pyruvate = 5-(3,3-dimethylguanidino)-2-oxopentanoate + L-alanine. The enzyme catalyses N(omega),N('omega)-dimethyl-L-arginine + pyruvate = 5-(3,3'-dimethylguanidino)-2-oxopentanoate + L-alanine. The catalysed reaction is N(omega),N(omega)-dimethyl-L-arginine + glyoxylate = 5-(3,3-dimethylguanidino)-2-oxopentanoate + glycine. It carries out the reaction N(omega),N('omega)-dimethyl-L-arginine + glyoxylate = 5-(3,3'-dimethylguanidino)-2-oxopentanoate + glycine. It catalyses the reaction N(omega)-methyl-L-arginine + pyruvate = 5-(3-methylguanidino)-2-oxopentanoate + L-alanine. The enzyme catalyses N(omega)-methyl-L-arginine + glyoxylate = 5-(3-methylguanidino)-2-oxopentanoate + glycine. The catalysed reaction is L-ornithine + pyruvate = 5-amino-2-oxopentanoate + L-alanine. It carries out the reaction L-ornithine + glyoxylate = 5-amino-2-oxopentanoate + glycine. It catalyses the reaction (2S)-2-aminobutanoate + glyoxylate = 2-oxobutanoate + glycine. The enzyme catalyses N(omega),N(omega)-dimethyl-L-arginine + oxaloacetate = 5-(3,3-dimethylguanidino)-2-oxopentanoate + L-aspartate. The catalysed reaction is oxaloacetate + L-alanine = L-aspartate + pyruvate. It carries out the reaction N(omega),N(omega)-dimethyl-L-arginine + 2-oxobutanoate = 5-(3,3-dimethylguanidino)-2-oxopentanoate + (2S)-2-aminobutanoate. It catalyses the reaction 2-oxopentanoate + N(omega),N(omega)-dimethyl-L-arginine = 5-(3,3-dimethylguanidino)-2-oxopentanoate + L-2-aminopentanoate. The enzyme catalyses 2-oxohexanoate + N(omega),N(omega)-dimethyl-L-arginine = L-2-aminohexanoate + 5-(3,3-dimethylguanidino)-2-oxopentanoate. With respect to regulation, inhibited by 5-fluorouracil and 6-fluorouracil. Inhibited by phenylhydrazine, hydroxylamine, l-amino-L-proline, para-chloromercuribenzoate and HgCl2. Functionally, multifunctional aminotransferase with a broad substrate specificity. Catalyzes the conversion of glyoxylate to glycine using alanine as the amino donor. Catalyzes metabolism of not L- but the D-isomer of D-beta-aminoisobutyric acid to generate 2-methyl-3-oxopropanoate and alanine. Catalyzes the transfer of the amino group from beta-alanine to pyruvate to yield L-alanine and 3-oxopropanoate. Can metabolize NG-monomethyl-L-arginine (NMMA), asymmetric NG,NG-dimethyl-L-arginine (ADMA) and symmetric NG,N'G-dimethyl-L-arginine (SDMA). ADMA is a potent inhibitor of nitric-oxide (NO) synthase, and this activity provides mechanism through which the kidney regulates blood pressure. The sequence is that of Alanine--glyoxylate aminotransferase 2, mitochondrial (Agxt2) from Rattus norvegicus (Rat).